A 356-amino-acid chain; its full sequence is Glycerol-1-phosphate dehydrogenase [NAD(P)+] (356 aa).

NAD(+)-binding positions include 103 to 107 (GRSID) and 125 to 128 (TAAS). Position 130 (Asp130) interacts with substrate. Position 134 (Ser134) interacts with NAD(+). A substrate-binding site is contributed by Asp177. 2 residues coordinate Zn(2+): Asp177 and His257. His261 contributes to the substrate binding site. His273 contacts Zn(2+).

The protein belongs to the glycerol-1-phosphate dehydrogenase family. Zn(2+) serves as cofactor.

It is found in the cytoplasm. The catalysed reaction is sn-glycerol 1-phosphate + NAD(+) = dihydroxyacetone phosphate + NADH + H(+). The enzyme catalyses sn-glycerol 1-phosphate + NADP(+) = dihydroxyacetone phosphate + NADPH + H(+). Its pathway is membrane lipid metabolism; glycerophospholipid metabolism. Catalyzes the NAD(P)H-dependent reduction of dihydroxyacetonephosphate (DHAP or glycerone phosphate) to glycerol 1-phosphate (G1P). The G1P thus generated is used as the glycerophosphate backbone of phospholipids in the cellular membranes of Archaea. The sequence is that of Glycerol-1-phosphate dehydrogenase [NAD(P)+] from Methanosarcina mazei (strain ATCC BAA-159 / DSM 3647 / Goe1 / Go1 / JCM 11833 / OCM 88) (Methanosarcina frisia).